The following is a 452-amino-acid chain: Poly(A) polymerase I (452 aa).

Residues Asp68, Asp70, and Asp150 contribute to the active site. The segment at 427–452 is disordered; sequence EQQRLHPKPKKKYYRPRRRKTTCSAE. The segment covering 431 to 452 has biased composition (basic residues); that stretch reads LHPKPKKKYYRPRRRKTTCSAE.

The protein belongs to the tRNA nucleotidyltransferase/poly(A) polymerase family.

The catalysed reaction is RNA(n) + ATP = RNA(n)-3'-adenine ribonucleotide + diphosphate. In terms of biological role, adds poly(A) tail to the 3' end of many RNAs, which usually targets these RNAs for decay. Plays a significant role in the global control of gene expression, through influencing the rate of transcript degradation, and in the general RNA quality control. The sequence is that of Poly(A) polymerase I from Haemophilus influenzae (strain ATCC 51907 / DSM 11121 / KW20 / Rd).